A 269-amino-acid polypeptide reads, in one-letter code: Hydroxyethylthiazole kinase (269 aa).

Met-45 provides a ligand contact to substrate. ATP is bound by residues Arg-121 and Thr-167. Gly-194 is a substrate binding site.

This sequence belongs to the Thz kinase family. Mg(2+) is required as a cofactor.

It catalyses the reaction 5-(2-hydroxyethyl)-4-methylthiazole + ATP = 4-methyl-5-(2-phosphooxyethyl)-thiazole + ADP + H(+). It functions in the pathway cofactor biosynthesis; thiamine diphosphate biosynthesis; 4-methyl-5-(2-phosphoethyl)-thiazole from 5-(2-hydroxyethyl)-4-methylthiazole: step 1/1. Functionally, catalyzes the phosphorylation of the hydroxyl group of 4-methyl-5-beta-hydroxyethylthiazole (THZ). This is Hydroxyethylthiazole kinase from Bacillus mycoides (strain KBAB4) (Bacillus weihenstephanensis).